A 221-amino-acid polypeptide reads, in one-letter code: Histone H1C (221 aa).

2 disordered regions span residues 1-43 (MSDP…PPVS) and 113-221 (AAKK…AKKA). The H15 domain occupies 38–112 (THPPVSEMVF…GALGSFKLPA (75 aa)). Basic residues-rich tracts occupy residues 141-167 (KVKKTIAKKPKAATATKIKKPVAKTTK) and 175-221 (AAKK…AKKA).

This sequence belongs to the histone H1/H5 family.

It localises to the nucleus. The protein resides in the chromosome. In terms of biological role, histones H1 are necessary for the condensation of nucleosome chains into higher-order structures. In Chironomus tentans (Midge), this protein is Histone H1C.